The sequence spans 115 residues: Chondroitin proteoglycan 8 (115 aa).

A signal peptide spans 1-16 (MRPFILLALLVSVTVA). The tract at residues 33–96 (VRRTTRDASD…GSGAAEVTSV (64 aa)) is disordered. 5 O-linked (Xyl...) (chondroitin sulfate) serine glycosylation sites follow: Ser61, Ser63, Ser84, Ser88, and Ser109.

The protein is Chondroitin proteoglycan 8 of Caenorhabditis elegans.